A 425-amino-acid chain; its full sequence is Secernin-2 (425 aa).

The active site involves C12. Position 52 is a phosphothreonine (T52).

This sequence belongs to the peptidase C69 family. Secernin subfamily.

The chain is Secernin-2 (SCRN2) from Homo sapiens (Human).